The following is a 331-amino-acid chain: Anthranilate phosphoribosyltransferase (331 aa).

5-phospho-alpha-D-ribose 1-diphosphate is bound by residues Gly79, 82-83 (GD), Thr87, 89-92 (NVST), 107-115 (KHGNYGVSS), and Ser119. Gly79 is an anthranilate binding site. Mg(2+) is bound at residue Ser91. Asn110 contributes to the anthranilate binding site. Arg165 contributes to the anthranilate binding site. Mg(2+)-binding residues include Asp223 and Glu224.

It belongs to the anthranilate phosphoribosyltransferase family. In terms of assembly, homodimer. It depends on Mg(2+) as a cofactor.

The enzyme catalyses N-(5-phospho-beta-D-ribosyl)anthranilate + diphosphate = 5-phospho-alpha-D-ribose 1-diphosphate + anthranilate. It functions in the pathway amino-acid biosynthesis; L-tryptophan biosynthesis; L-tryptophan from chorismate: step 2/5. Catalyzes the transfer of the phosphoribosyl group of 5-phosphorylribose-1-pyrophosphate (PRPP) to anthranilate to yield N-(5'-phosphoribosyl)-anthranilate (PRA). In Christiangramia forsetii (strain DSM 17595 / CGMCC 1.15422 / KT0803) (Gramella forsetii), this protein is Anthranilate phosphoribosyltransferase.